A 423-amino-acid polypeptide reads, in one-letter code: Glutamate-1-semialdehyde 2,1-aminomutase (423 aa).

An N6-(pyridoxal phosphate)lysine modification is found at K266.

This sequence belongs to the class-III pyridoxal-phosphate-dependent aminotransferase family. HemL subfamily. In terms of assembly, homodimer. It depends on pyridoxal 5'-phosphate as a cofactor.

The protein localises to the cytoplasm. The catalysed reaction is (S)-4-amino-5-oxopentanoate = 5-aminolevulinate. The protein operates within porphyrin-containing compound metabolism; protoporphyrin-IX biosynthesis; 5-aminolevulinate from L-glutamyl-tRNA(Glu): step 2/2. In Nitratidesulfovibrio vulgaris (strain DP4) (Desulfovibrio vulgaris), this protein is Glutamate-1-semialdehyde 2,1-aminomutase.